The sequence spans 497 residues: Lysine--tRNA ligase (497 aa).

Mg(2+) contacts are provided by glutamate 409 and glutamate 416.

It belongs to the class-II aminoacyl-tRNA synthetase family. In terms of assembly, homodimer. Mg(2+) serves as cofactor.

The protein localises to the cytoplasm. It catalyses the reaction tRNA(Lys) + L-lysine + ATP = L-lysyl-tRNA(Lys) + AMP + diphosphate. The protein is Lysine--tRNA ligase of Streptococcus pyogenes serotype M6 (strain ATCC BAA-946 / MGAS10394).